The primary structure comprises 643 residues: Threonine--tRNA ligase (643 aa).

Residues 1 to 61 form the TGS domain; it reads MPIITLPDGS…EQDATLEIIT (61 aa). The interval 243-534 is catalytic; the sequence is DHRKIGKALD…ITEEYAGFFP (292 aa). 3 residues coordinate Zn(2+): cysteine 334, histidine 385, and histidine 511.

The protein belongs to the class-II aminoacyl-tRNA synthetase family. In terms of assembly, homodimer. Requires Zn(2+) as cofactor.

It localises to the cytoplasm. It carries out the reaction tRNA(Thr) + L-threonine + ATP = L-threonyl-tRNA(Thr) + AMP + diphosphate + H(+). Functionally, catalyzes the attachment of threonine to tRNA(Thr) in a two-step reaction: L-threonine is first activated by ATP to form Thr-AMP and then transferred to the acceptor end of tRNA(Thr). Also edits incorrectly charged L-seryl-tRNA(Thr). This Haemophilus influenzae (strain ATCC 51907 / DSM 11121 / KW20 / Rd) protein is Threonine--tRNA ligase.